The primary structure comprises 203 residues: Urease accessory protein UreG (203 aa).

14-21 (GPVGSGKT) lines the GTP pocket.

It belongs to the SIMIBI class G3E GTPase family. UreG subfamily. In terms of assembly, homodimer. UreD, UreF and UreG form a complex that acts as a GTP-hydrolysis-dependent molecular chaperone, activating the urease apoprotein by helping to assemble the nickel containing metallocenter of UreC. The UreE protein probably delivers the nickel.

It localises to the cytoplasm. Functionally, facilitates the functional incorporation of the urease nickel metallocenter. This process requires GTP hydrolysis, probably effectuated by UreG. This chain is Urease accessory protein UreG, found in Allorhizobium ampelinum (strain ATCC BAA-846 / DSM 112012 / S4) (Agrobacterium vitis (strain S4)).